A 121-amino-acid polypeptide reads, in one-letter code: UPF0295 protein BH0952 (121 aa).

The next 2 helical transmembrane spans lie at 12–32 (IRTFALSLVFLGILVMYIGIF) and 41–61 (VLAMILGFLCIIASTAVYFWI).

It belongs to the UPF0295 family.

It localises to the cell membrane. The polypeptide is UPF0295 protein BH0952 (Halalkalibacterium halodurans (strain ATCC BAA-125 / DSM 18197 / FERM 7344 / JCM 9153 / C-125) (Bacillus halodurans)).